The primary structure comprises 167 residues: NADH-ubiquinone oxidoreductase chain 6 (167 aa).

5 helical membrane passes run 1 to 21, 27 to 47, 50 to 70, 88 to 108, and 143 to 163; these read MKMM…VAFA, VYGG…VVSL, VFLG…VFGY, VALS…LMSG, and WALV…LEVV.

This sequence belongs to the complex I subunit 6 family. In terms of assembly, core subunit of respiratory chain NADH dehydrogenase (Complex I) which is composed of 45 different subunits.

Its subcellular location is the mitochondrion inner membrane. The catalysed reaction is a ubiquinone + NADH + 5 H(+)(in) = a ubiquinol + NAD(+) + 4 H(+)(out). In terms of biological role, core subunit of the mitochondrial membrane respiratory chain NADH dehydrogenase (Complex I) which catalyzes electron transfer from NADH through the respiratory chain, using ubiquinone as an electron acceptor. Essential for the catalytic activity and assembly of complex I. This is NADH-ubiquinone oxidoreductase chain 6 (MT-ND6) from Osphranter robustus (Wallaroo).